A 51-amino-acid chain; its full sequence is Large ribosomal subunit protein bL33 (51 aa).

The interval 1–23 (MREKIKLESSAGTGHFYTTTKNK) is disordered. Polar residues predominate over residues 10-20 (SAGTGHFYTTT).

It belongs to the bacterial ribosomal protein bL33 family.

In Methylobacillus flagellatus (strain ATCC 51484 / DSM 6875 / VKM B-1610 / KT), this protein is Large ribosomal subunit protein bL33.